The sequence spans 452 residues: Methionine aminopeptidase 2 (452 aa).

Positions 1 to 96 (MAVQALPEIN…VPLSTLFPNN (96 aa)) are disordered. Positions 18–35 (GAANAAAKGQAAQGTAGN) are enriched in low complexity. Residues 36 to 53 (DDAENDESDEDKEDEQEV) show a composition bias toward acidic residues. Basic residues predominate over residues 62 to 77 (GKKKKKKTKKKKKKGT). Histidine 202 is a binding site for substrate. Positions 222, 233, and 302 each coordinate a divalent metal cation. Residue histidine 310 participates in substrate binding. Residues glutamate 338 and glutamate 433 each contribute to the a divalent metal cation site.

This sequence belongs to the peptidase M24A family. Methionine aminopeptidase eukaryotic type 2 subfamily. Co(2+) is required as a cofactor. Zn(2+) serves as cofactor. Requires Mn(2+) as cofactor. It depends on Fe(2+) as a cofactor.

The protein resides in the cytoplasm. The enzyme catalyses Release of N-terminal amino acids, preferentially methionine, from peptides and arylamides.. Functionally, cotranslationally removes the N-terminal methionine from nascent proteins. The N-terminal methionine is often cleaved when the second residue in the primary sequence is small and uncharged (Met-Ala-, Cys, Gly, Pro, Ser, Thr, or Val). The polypeptide is Methionine aminopeptidase 2 (Coccidioides posadasii (strain C735) (Valley fever fungus)).